We begin with the raw amino-acid sequence, 339 residues long: Ketol-acid reductoisomerase (NADP(+)) (339 aa).

A KARI N-terminal Rossmann domain is found at 1 to 182 (MKIYYEKDAD…GNTRAGVIET (182 aa)). Residues 24-27 (YGSQ), Ser51, Ser53, and 83-86 (DEKQ) each bind NADP(+). The active site involves His108. Gly134 provides a ligand contact to NADP(+). The region spanning 183-328 (SFREETETDL…EKLRGMMHWA (146 aa)) is the KARI C-terminal knotted domain. Positions 191, 195, 227, and 231 each coordinate Mg(2+). Position 252 (Ser252) interacts with substrate.

The protein belongs to the ketol-acid reductoisomerase family. Mg(2+) serves as cofactor.

The enzyme catalyses (2R)-2,3-dihydroxy-3-methylbutanoate + NADP(+) = (2S)-2-acetolactate + NADPH + H(+). The catalysed reaction is (2R,3R)-2,3-dihydroxy-3-methylpentanoate + NADP(+) = (S)-2-ethyl-2-hydroxy-3-oxobutanoate + NADPH + H(+). Its pathway is amino-acid biosynthesis; L-isoleucine biosynthesis; L-isoleucine from 2-oxobutanoate: step 2/4. The protein operates within amino-acid biosynthesis; L-valine biosynthesis; L-valine from pyruvate: step 2/4. Involved in the biosynthesis of branched-chain amino acids (BCAA). Catalyzes an alkyl-migration followed by a ketol-acid reduction of (S)-2-acetolactate (S2AL) to yield (R)-2,3-dihydroxy-isovalerate. In the isomerase reaction, S2AL is rearranged via a Mg-dependent methyl migration to produce 3-hydroxy-3-methyl-2-ketobutyrate (HMKB). In the reductase reaction, this 2-ketoacid undergoes a metal-dependent reduction by NADPH to yield (R)-2,3-dihydroxy-isovalerate. This Hyphomonas neptunium (strain ATCC 15444) protein is Ketol-acid reductoisomerase (NADP(+)).